The following is a 287-amino-acid chain: Small ribosomal subunit biogenesis GTPase RsgA (287 aa).

The 158-residue stretch at serine 61–leucine 218 folds into the CP-type G domain. Residues asparagine 110 to aspartate 113 and glycine 161 to threonine 169 each bind GTP. Zn(2+) contacts are provided by cysteine 242, cysteine 247, histidine 249, and cysteine 255.

Belongs to the TRAFAC class YlqF/YawG GTPase family. RsgA subfamily. Monomer. Associates with 30S ribosomal subunit, binds 16S rRNA. It depends on Zn(2+) as a cofactor.

It localises to the cytoplasm. One of several proteins that assist in the late maturation steps of the functional core of the 30S ribosomal subunit. Helps release RbfA from mature subunits. May play a role in the assembly of ribosomal proteins into the subunit. Circularly permuted GTPase that catalyzes slow GTP hydrolysis, GTPase activity is stimulated by the 30S ribosomal subunit. The chain is Small ribosomal subunit biogenesis GTPase RsgA from Clostridium perfringens (strain SM101 / Type A).